The following is a 432-amino-acid chain: Trigger factor (432 aa).

Residues 165-250 enclose the PPIase FKBP-type domain; that stretch reads GDFAKIDFEG…LKEIQVKAPQ (86 aa).

Belongs to the FKBP-type PPIase family. Tig subfamily.

It is found in the cytoplasm. It carries out the reaction [protein]-peptidylproline (omega=180) = [protein]-peptidylproline (omega=0). Functionally, involved in protein export. Acts as a chaperone by maintaining the newly synthesized protein in an open conformation. Functions as a peptidyl-prolyl cis-trans isomerase. The sequence is that of Trigger factor from Wolinella succinogenes (strain ATCC 29543 / DSM 1740 / CCUG 13145 / JCM 31913 / LMG 7466 / NCTC 11488 / FDC 602W) (Vibrio succinogenes).